Here is a 374-residue protein sequence, read N- to C-terminus: WD repeat-containing protein JIP5 (374 aa).

7 WD repeats span residues 21–61 (AYTS…GETS), 68–107 (PSKR…IQLS), 120–158 (AHEC…SIRT), 161–200 (QHFD…STPL), 205–244 (DQED…ADSV), 249–287 (GHPA…FLGV), and 290–330 (THEE…EDSD). Over residues 325–344 (LFEDSDEDDEMEEDEPDSDE) the composition is skewed to acidic residues. The segment at 325–374 (LFEDSDEDDEMEEDEPDSDEEKSKKKKKDNGMKDMSRGQAENDGSFFADL) is disordered.

Belongs to the WD repeat WDR55 family.

It is found in the nucleus. It localises to the nucleolus. This chain is WD repeat-containing protein JIP5 (JIP5), found in Cryptococcus neoformans var. neoformans serotype D (strain B-3501A) (Filobasidiella neoformans).